Consider the following 367-residue polypeptide: Polygalacturonase (367 aa).

The first 18 residues, 1–18 (MRTSFVTMLALGAAAVSA), serve as a signal peptide directing secretion. A disulfide bond links Cys-34 and Cys-49. PbH1 repeat units lie at residues 161–191 (ADRLTLDHITIDNSEGDAKGGHNTDAFDVGS), 192–213 (STFITISNANIKNQDDCLAINS), 214–234 (GSNIKFVGGTCSGGHGISIGS), 243–264 (VKDVTISDSTVINSDNGVRVKT), and 272–294 (VSGVTFSNIKLSNIAKYGIVIEQ). The Proton donor role is filled by Asp-206. The cysteines at positions 208 and 224 are disulfide-linked. His-228 is a catalytic residue. 2 N-linked (GlcNAc...) asparagine glycosylation sites follow: Asn-318 and Asn-336. 2 cysteine pairs are disulfide-bonded: Cys-334/Cys-339 and Cys-358/Cys-367.

Belongs to the glycosyl hydrolase 28 family.

The protein resides in the secreted. It carries out the reaction (1,4-alpha-D-galacturonosyl)n+m + H2O = (1,4-alpha-D-galacturonosyl)n + (1,4-alpha-D-galacturonosyl)m.. The sequence is that of Polygalacturonase (PG1) from Penicillium digitatum (Green mold).